An 872-amino-acid chain; its full sequence is Probable LRR receptor-like serine/threonine-protein kinase At1g51880 (872 aa).

A signal peptide spans 1–23; that stretch reads MKSIHGFLLFLITAYVILESVQA. Residues 24 to 513 are Extracellular-facing; sequence QDQLGFISLD…GKSKKVPMIP (490 aa). N-linked (GlcNAc...) asparagine glycans are attached at residues asparagine 40, asparagine 49, asparagine 96, asparagine 181, asparagine 255, asparagine 268, asparagine 294, asparagine 339, and asparagine 401. LRR repeat units lie at residues 411-434, 435-457, and 459-482; these read RIISLNLAENKLTGTITPEISKLT, QLIELDLSKNDLSGEIPEFFADM, and LLKLINLSGNLGLNSTIPDSIQQR. 2 N-linked (GlcNAc...) asparagine glycosylation sites follow: asparagine 464 and asparagine 472. Residues 514 to 534 form a helical membrane-spanning segment; sequence IVASVAGVFALLVILAIFFVV. Residues 535-872 lie on the Cytoplasmic side of the membrane; that stretch reads RRKNGESNKG…SASEFSPGAR (338 aa). A Phosphothreonine modification is found at threonine 557. Residues 566–838 form the Protein kinase domain; it reads NNFERVLGKG…HVVTELNECV (273 aa). Residues 572–580 and lysine 593 contribute to the ATP site; that span reads LGKGGFGTV. Position 638 is a phosphotyrosine (tyrosine 638). Residue aspartate 690 is the Proton acceptor of the active site. Position 724 is a phosphoserine (serine 724). Phosphothreonine is present on residues threonine 725 and threonine 730. The residue at position 738 (tyrosine 738) is a Phosphotyrosine.

The protein belongs to the protein kinase superfamily. Ser/Thr protein kinase family.

It is found in the membrane. The enzyme catalyses L-seryl-[protein] + ATP = O-phospho-L-seryl-[protein] + ADP + H(+). It carries out the reaction L-threonyl-[protein] + ATP = O-phospho-L-threonyl-[protein] + ADP + H(+). This chain is Probable LRR receptor-like serine/threonine-protein kinase At1g51880, found in Arabidopsis thaliana (Mouse-ear cress).